A 689-amino-acid polypeptide reads, in one-letter code: Glycine--tRNA ligase beta subunit (689 aa).

It belongs to the class-II aminoacyl-tRNA synthetase family. Tetramer of two alpha and two beta subunits.

The protein localises to the cytoplasm. It catalyses the reaction tRNA(Gly) + glycine + ATP = glycyl-tRNA(Gly) + AMP + diphosphate. This is Glycine--tRNA ligase beta subunit from Enterobacter sp. (strain 638).